We begin with the raw amino-acid sequence, 20 residues long: Ribulose bisphosphate carboxylase small subunit (20 aa).

The protein belongs to the RuBisCO small chain family. As to quaternary structure, heterohexadecamer of 8 large and 8 small subunits.

The protein localises to the plastid. It localises to the chloroplast. RuBisCO catalyzes two reactions: the carboxylation of D-ribulose 1,5-bisphosphate, the primary event in carbon dioxide fixation, as well as the oxidative fragmentation of the pentose substrate in the photorespiration process. Both reactions occur simultaneously and in competition at the same active site. Although the small subunit is not catalytic it is essential for maximal activity. This Chattonella marina var. antiqua (Red tide flagellate) protein is Ribulose bisphosphate carboxylase small subunit.